Reading from the N-terminus, the 103-residue chain is Non-histone chromosomal protein 6 (103 aa).

Disordered regions lie at residues 1–30 (MPKAAAKSKTTGKVEKRRAKKDPNAPKRGL) and 70–103 (KQRAPYEAKAAADKKRYEDEKQAYNAEADEEESS). Residues 26–94 (PKRGLSAYMF…RYEDEKQAYN (69 aa)) constitute a DNA-binding region (HMG box). The span at 70–91 (KQRAPYEAKAAADKKRYEDEKQ) shows a compositional bias: basic and acidic residues.

The protein belongs to the NHP6 family. Weakly associates with the stable heterodimer of ctc-1/pob3 and ctc-2/spt16 to form the FACT complex.

It is found in the nucleus. The protein resides in the chromosome. DNA-binding protein that induces severe bending of DNA. Required for DNA-binding by the FACT complex, a general chromatin factor that acts to reorganize nucleosomes. The FACT complex is involved in multiple processes that require DNA as a template such as mRNA elongation, DNA replication and DNA repair. Also augments the fidelity of transcription by RNA polymerase III independently of any role in the FACT complex. The sequence is that of Non-histone chromosomal protein 6 (nhp-1) from Neurospora crassa (strain ATCC 24698 / 74-OR23-1A / CBS 708.71 / DSM 1257 / FGSC 987).